The chain runs to 148 residues: FAD synthase (148 aa).

Residues 5–6 (TF), 10–13 (HPGH), Asp-92, and Tyr-119 contribute to the ATP site.

Belongs to the archaeal FAD synthase family. As to quaternary structure, homodimer. A divalent metal cation serves as cofactor.

The catalysed reaction is FMN + ATP + H(+) = FAD + diphosphate. It participates in cofactor biosynthesis; FAD biosynthesis; FAD from FMN: step 1/1. Its function is as follows. Catalyzes the transfer of the AMP portion of ATP to flavin mononucleotide (FMN) to produce flavin adenine dinucleotide (FAD) coenzyme. This is FAD synthase from Methanosphaera stadtmanae (strain ATCC 43021 / DSM 3091 / JCM 11832 / MCB-3).